The chain runs to 866 residues: MITVTPGELATIDDALTDLLLERVFYWAEVRKASVHYKPLRGISDRHIHDLVRSIAACETGAAANLAVKKATNAFLELKEVRGYRGRLSPLAYEEFQRHTVRYLTIYKASCGFEINVSMRYKCRSNRGESCVISRVRYNRGDEIVGLSGCLAKMTKDEELALANDFSVLHSSRRGGNCLMLGPARFVNHDCSANARFVPVPSGMVIQAVKPINVGDEITVKYAENYFGRRNKECLCQTCEENSRGLYGSPQESSEEESDDDMDELTKIELQRRKKRQEQREGGTPELREGGRGSSESSRETSEEAIEISTSKNWPLIPKIESHTADSTPLPVPVGEVSEATVTEVSTVVPAQEAIPVNESTTALSQSSNEFQDPTIDPILNGASAEIRFPSLPSPDTTTSPESQVPPFIQPKSARRNHHYLGMHNTDERVRFNDRLSVLDERGGSEDMESCLVSGSESRDDSTAMSRDEESSRDDGDGSRSKRSKRHVRAQRKNSGSWSFSQEDLSFDRLCKAAREQAYDPSRYALTGVYGFSVSGATQTCVSCCSVYNLTDGPKTLGHFCPRCHRHAAIHSFAWPYTNHKHALPLCLLMMRPPKKLEDEDWGLSKPQVAQQFGAKNRKIFEEDGSLVQKKRKSLAWSWEYTKEEPAQEITSMRIEDMSPKELKKWSQAGRQTRSGRVSMLPEKPKRSRKSAPEPVEMRDNVAQLSREERAWKRARRGTVGHEKVEVNTPTVETPSTGTPKVKKLHWKQKLAMERRQKEAEAAEVAETRVADGVDASTPSPAGSTPTPRGRGRPRKSSREEEIPPEKTPEAKRPSPAATKTPSMSPKVKKEPLSMSFSMSPTSRSGRVRNPTEKALQLMEQGEYVI.

The region spanning 111-223 (CGFEINVSMR…VGDEITVKYA (113 aa)) is the SET domain. Disordered stretches follow at residues 243–310 (SRGL…EIST), 359–378 (ESTTALSQSSNEFQDPTIDP), 383–416 (ASAEIRFPSLPSPDTTTSPESQVPPFIQPKSARR), 443–495 (GGSE…RKNS), and 661–853 (KELK…NPTE). Residues 253–263 (SSEEESDDDMD) are compositionally biased toward acidic residues. Residues 278–302 (EQREGGTPELREGGRGSSESSRETS) show a composition bias toward basic and acidic residues. Residues 359–372 (ESTTALSQSSNEFQ) are compositionally biased toward polar residues. Positions 390-403 (PSLPSPDTTTSPES) are enriched in low complexity. A compositionally biased stretch (basic and acidic residues) spans 457–480 (ESRDDSTAMSRDEESSRDDGDGSR). Basic residues predominate over residues 481 to 492 (SKRSKRHVRAQR). Positions 696-712 (VEMRDNVAQLSREERAW) are enriched in basic and acidic residues. Over residues 728–739 (NTPTVETPSTGT) the composition is skewed to polar residues. The segment covering 751-772 (LAMERRQKEAEAAEVAETRVAD) has biased composition (basic and acidic residues). The segment covering 776 to 789 (ASTPSPAGSTPTPR) has biased composition (low complexity). Positions 797 to 813 (SSREEEIPPEKTPEAKR) are enriched in basic and acidic residues. The segment covering 834-845 (SMSFSMSPTSRS) has biased composition (low complexity).

Belongs to the class V-like SAM-binding methyltransferase superfamily. Histone-lysine methyltransferase family. Suvar4-20 subfamily.

Its subcellular location is the nucleus. The protein localises to the chromosome. The catalysed reaction is L-lysyl(20)-[histone H4] + 3 S-adenosyl-L-methionine = N(6),N(6),N(6)-trimethyl-L-lysyl(20)-[histone H4] + 3 S-adenosyl-L-homocysteine + 3 H(+). Its function is as follows. Histone methyltransferase that trimethylates 'Lys-20' of histone H4 to form H4K20me3. In Yarrowia lipolytica (strain CLIB 122 / E 150) (Yeast), this protein is Histone-lysine N-methyltransferase SET9 (SET9).